The primary structure comprises 421 residues: Stemmadenine O-acetyltransferase (421 aa).

Positions 1–21 are disordered; sequence MAPQMQILSEELIQPSSPTPQ. Catalysis depends on proton acceptor residues His160 and Asp362.

The protein belongs to the plant acyltransferase family. As to quaternary structure, monomer. Expressed in leaf epidermis.

It carries out the reaction 15alpha-stemmadenine + acetyl-CoA = O-acetyl-15alpha-stemmadenine + CoA. The protein operates within alkaloid biosynthesis. Its function is as follows. Component of iboga and aspidosperma monoterpenoid indole alkaloids (MIAs, e.g. tabersonine and catharanthine) biosynthesis pathway from 19E-geissoschizine. Acetyltransferase that catalyzes the formation of O-acetylstemmadenine from stemmadenine. The chain is Stemmadenine O-acetyltransferase from Catharanthus roseus (Madagascar periwinkle).